A 430-amino-acid chain; its full sequence is MSSRSPRPPPRRCRRRLPRPSCCCCCCRRSHLNEDTGRFVLLAALIGLYLVAGATVFSALESPGEAEARARWGATLRNFSAAHGVAEPELRAFLRHYEAALAAGVRADALRPRWDFPGAFYFVGTVVSTIGFGMTTPATVGGKAFLIAYGLFGCAGTILFFNLFLERIISLLAFIMRACRERQLRRSGLLPATFRRGSALSEADSLAGWKPSVYHVLLILGLFAVLLACCASAMYTSVEGWDYVDSLYFCFVTFSTIGFGDLVSSQHAAYRNQGLYRLGNFLFILLGVCCIYSLFNVISILIKQVLNWMLRKLSCRCCTRCCPAPGAPLSRRNAITPGSRLRRRLAALGTDPAARDSDAEGRRLSGELISMRDLTASNKVSLALLQKQLSETANGYPRSVCVNTRQNGFSGGVGALGIMNNRLAETSASR.

Topologically, residues 1 to 38 (MSSRSPRPPPRRCRRRLPRPSCCCCCCRRSHLNEDTGR) are cytoplasmic. An ER retention/retrieval signal region spans residues 11 to 16 (RRCRRR). Residues 39–59 (FVLLAALIGLYLVAGATVFSA) form a helical membrane-spanning segment. The N-linked (GlcNAc...) asparagine glycan is linked to N78. An intramembrane region (pore-forming) is located at residues 114–134 (WDFPGAFYFVGTVVSTIGFGM). K(+) contacts are provided by T129, I130, and G131. A selectivity filter 1 region spans residues 129–134 (TIGFGM). A helical membrane pass occupies residues 145–165 (FLIAYGLFGCAGTILFFNLFL). Over 166–212 (ERIISLLAFIMRACRERQLRRSGLLPATFRRGSALSEADSLAGWKPS) the chain is Cytoplasmic. Residues 213–233 (VYHVLLILGLFAVLLACCASA) form a helical membrane-spanning segment. The pore-forming intramembrane region spans 243-263 (YVDSLYFCFVTFSTIGFGDLV). 4 residues coordinate K(+): T256, I257, G258, and F259. Residues 256-261 (TIGFGD) are selectivity filter 2. Residues 282–302 (LFILLGVCCIYSLFNVISILI) form a helical membrane-spanning segment. Over 303 to 430 (KQVLNWMLRK…NRLAETSASR (128 aa)) the chain is Cytoplasmic.

This sequence belongs to the two pore domain potassium channel (TC 1.A.1.8) family. In terms of assembly, homodimer. Heterodimer with KCNK13. In terms of tissue distribution, highly expressed in most brain regions. Also expressed in other tissues such as lung, kidney, liver, stomach and spleen.

The protein resides in the cell membrane. It localises to the endoplasmic reticulum membrane. It carries out the reaction K(+)(in) = K(+)(out). K(+) channel subunit that may homo- and heterodimerize to form functional channels with distinct regulatory and gating properties. Can heterodimerize with KCNK13 subunit to conduct K(+) outward rectifying currents at the plasma membrane. The homodimers are mainly retained in the endoplasmic reticulum compartment and may be targeted to the cell surface upon phosphorylation or other activation signals yet to be elucidated. In Rattus norvegicus (Rat), this protein is Potassium channel subfamily K member 12 (Kcnk12).